Reading from the N-terminus, the 389-residue chain is S-adenosylmethionine synthase (389 aa).

His17 lines the ATP pocket. Asp19 is a Mg(2+) binding site. Glu45 contributes to the K(+) binding site. Positions 58 and 101 each coordinate L-methionine. A flexible loop region spans residues Gln101 to Glu111. ATP-binding positions include Asp168 to Lys170, Arg234 to Phe235, Asp243, Arg249 to Lys250, Ala266, and Lys270. Asp243 contributes to the L-methionine binding site. Residue Lys274 participates in L-methionine binding.

It belongs to the AdoMet synthase family. In terms of assembly, homotetramer; dimer of dimers. It depends on Mg(2+) as a cofactor. The cofactor is K(+).

Its subcellular location is the cytoplasm. The enzyme catalyses L-methionine + ATP + H2O = S-adenosyl-L-methionine + phosphate + diphosphate. The protein operates within amino-acid biosynthesis; S-adenosyl-L-methionine biosynthesis; S-adenosyl-L-methionine from L-methionine: step 1/1. Functionally, catalyzes the formation of S-adenosylmethionine (AdoMet) from methionine and ATP. The overall synthetic reaction is composed of two sequential steps, AdoMet formation and the subsequent tripolyphosphate hydrolysis which occurs prior to release of AdoMet from the enzyme. The sequence is that of S-adenosylmethionine synthase from Syntrophotalea carbinolica (strain DSM 2380 / NBRC 103641 / GraBd1) (Pelobacter carbinolicus).